The chain runs to 157 residues: Globin (157 aa).

Residue Gly1 is modified to N-acetylglycine. The region spanning 8 to 155 (SLSADQKAAI…MANIIDAEQK (148 aa)) is the Globin domain. Residues His70 and His102 each contribute to the heme b site.

This sequence belongs to the globin family. Monomer.

The chain is Globin from Nerita albicilla (Ox-palate nerite).